The following is a 505-amino-acid chain: Zealexin A1 synthase (505 aa).

The chain crosses the membrane as a helical span at residues 7–26 (IAVGTVAVVAVLSKLKSAVT). Cysteine 442 serves as a coordination point for heme.

This sequence belongs to the cytochrome P450 family. The cofactor is heme.

It localises to the membrane. It carries out the reaction (S)-beta-macrocarpene + 3 reduced [NADPH--hemoprotein reductase] + 3 O2 = zealexin A1 + 3 oxidized [NADPH--hemoprotein reductase] + 4 H2O + 4 H(+). Its function is as follows. Involved in production of the antifungal phytoalexin zealexin A1. The enzyme sequentially oxidizes(S)-beta-macrocarpene via alcohol and aldehyde intermediates to form zealexin A1, a maize phytoalexin that provides biochemical protection against fungal infection. In Zea mays (Maize), this protein is Zealexin A1 synthase.